The following is a 617-amino-acid chain: Pyrophosphate--fructose 6-phosphate 1-phosphotransferase subunit alpha 2 (617 aa).

It belongs to the phosphofructokinase type A (PFKA) family. PPi-dependent PFK group II subfamily. Clade 'Long' sub-subfamily. Tetramer of two alpha (regulatory) and two beta (catalytic) chains. As to expression, expressed in roots and specific parts such as the trichomes of leaves, cotyledon veins, as well as in stamen and gynoecium of flowers.

The protein resides in the cytoplasm. It participates in carbohydrate degradation; glycolysis; D-glyceraldehyde 3-phosphate and glycerone phosphate from D-glucose: step 3/4. Allosterically activated by fructose 2,6-bisphosphate. Functionally, regulatory subunit of pyrophosphate--fructose 6-phosphate 1-phosphotransferase. The protein is Pyrophosphate--fructose 6-phosphate 1-phosphotransferase subunit alpha 2 of Arabidopsis thaliana (Mouse-ear cress).